A 101-amino-acid chain; its full sequence is Glutenin, high molecular weight subunit PC256 (101 aa).

Positions 1 to 27 (EKLGQGQQPRQWLQPRQGQQGYYPTSP) are enriched in polar residues. A disordered region spans residues 1 to 65 (EKLGQGQQPR…QGYDSPYHVS (65 aa)). Low complexity predominate over residues 41-62 (QGYYPTSPQQSGQGQQGYDSPY).

It belongs to the gliadin/glutenin family. As to quaternary structure, disulfide-bridge linked aggregates.

Its function is as follows. Glutenins are high-molecular weight seed storage proteins of wheat endosperm. Thought to be responsible for the visco-elastic property of wheat dough. The polypeptide is Glutenin, high molecular weight subunit PC256 (Triticum aestivum (Wheat)).